The sequence spans 94 residues: Small ribosomal subunit protein bS18 (94 aa).

This sequence belongs to the bacterial ribosomal protein bS18 family. Part of the 30S ribosomal subunit. Forms a tight heterodimer with protein bS6.

Functionally, binds as a heterodimer with protein bS6 to the central domain of the 16S rRNA, where it helps stabilize the platform of the 30S subunit. In Polaromonas sp. (strain JS666 / ATCC BAA-500), this protein is Small ribosomal subunit protein bS18.